Consider the following 304-residue polypeptide: N-acetyl-D-glucosamine kinase (304 aa).

Residues 4–11 and 133–140 contribute to the ATP site; these read GFDIGGTK and GFGGGLIF. Residues His-157, Cys-178, Cys-180, and Cys-185 each coordinate Zn(2+).

This sequence belongs to the ROK (NagC/XylR) family. NagK subfamily.

It carries out the reaction N-acetyl-D-glucosamine + ATP = N-acetyl-D-glucosamine 6-phosphate + ADP + H(+). It participates in cell wall biogenesis; peptidoglycan recycling. In terms of biological role, catalyzes the phosphorylation of N-acetyl-D-glucosamine (GlcNAc) derived from cell-wall degradation, yielding GlcNAc-6-P. The polypeptide is N-acetyl-D-glucosamine kinase (Pasteurella multocida (strain Pm70)).